The sequence spans 196 residues: DnaA initiator-associating protein DiaA (196 aa).

Positions 34 to 196 constitute an SIS domain; that stretch reads LVQSLLNGNK…DNTLFPHQDD (163 aa).

It belongs to the SIS family. DiaA subfamily. In terms of assembly, homotetramer; dimer of dimers.

Its function is as follows. Required for the timely initiation of chromosomal replication via direct interactions with the DnaA initiator protein. This is DnaA initiator-associating protein DiaA from Cronobacter sakazakii (strain ATCC BAA-894) (Enterobacter sakazakii).